The sequence spans 79 residues: Cell division protein ZapB (79 aa).

A coiled-coil region spans residues 6 to 78 (FEKLEVKVQQ…LRALLGKMEE (73 aa)).

It belongs to the ZapB family. Homodimer. The ends of the coiled-coil dimer bind to each other, forming polymers. Interacts with FtsZ.

The protein localises to the cytoplasm. Non-essential, abundant cell division factor that is required for proper Z-ring formation. It is recruited early to the divisome by direct interaction with FtsZ, stimulating Z-ring assembly and thereby promoting cell division earlier in the cell cycle. Its recruitment to the Z-ring requires functional FtsA or ZipA. The protein is Cell division protein ZapB of Yersinia pseudotuberculosis serotype O:1b (strain IP 31758).